We begin with the raw amino-acid sequence, 249 residues long: 2-dehydro-3-deoxy-L-rhamnonate dehydrogenase (NAD(+)) (249 aa).

Tyr-156 (proton acceptor) is an active-site residue.

This sequence belongs to the short-chain dehydrogenases/reductases (SDR) family. As to quaternary structure, homotetramer.

The enzyme catalyses 2-dehydro-3-deoxy-L-rhamnonate + NAD(+) = 2,4-didehydro-3-deoxy-L-rhamnonate + NADH + H(+). The protein operates within carbohydrate degradation; L-rhamnose degradation. Its function is as follows. Catalyzes the NAD(+)-dependent dehydrogenation of 2-dehydro-3-deoxy-L-rhamnonate to form 2,4-didehydro-3-deoxy-L-rhamnonate. Does not show any detectable activity in the presence of NADP(+). Catalyzes the fourth step in an alternative pathway for rhamnose utilization that does not involve phosphorylated intermediates. The chain is 2-dehydro-3-deoxy-L-rhamnonate dehydrogenase (NAD(+)) from Sphingomonas sp. (strain SKA58).